Here is a 941-residue protein sequence, read N- to C-terminus: Bifunctional glutamine synthetase adenylyltransferase/adenylyl-removing enzyme (941 aa).

The tract at residues Met1–Gly431 is adenylyl removase. Residues Asn447–Lys941 are adenylyl transferase.

The protein belongs to the GlnE family. It depends on Mg(2+) as a cofactor.

The enzyme catalyses [glutamine synthetase]-O(4)-(5'-adenylyl)-L-tyrosine + phosphate = [glutamine synthetase]-L-tyrosine + ADP. It carries out the reaction [glutamine synthetase]-L-tyrosine + ATP = [glutamine synthetase]-O(4)-(5'-adenylyl)-L-tyrosine + diphosphate. Involved in the regulation of glutamine synthetase GlnA, a key enzyme in the process to assimilate ammonia. When cellular nitrogen levels are high, the C-terminal adenylyl transferase (AT) inactivates GlnA by covalent transfer of an adenylyl group from ATP to specific tyrosine residue of GlnA, thus reducing its activity. Conversely, when nitrogen levels are low, the N-terminal adenylyl removase (AR) activates GlnA by removing the adenylyl group by phosphorolysis, increasing its activity. The regulatory region of GlnE binds the signal transduction protein PII (GlnB) which indicates the nitrogen status of the cell. The chain is Bifunctional glutamine synthetase adenylyltransferase/adenylyl-removing enzyme from Bordetella pertussis (strain Tohama I / ATCC BAA-589 / NCTC 13251).